We begin with the raw amino-acid sequence, 261 residues long: Cytochrome c oxidase subunit 3 (261 aa).

Residues 1–15 (MTHQTHAYHMVNPSP) lie on the Mitochondrial matrix side of the membrane. A helical transmembrane segment spans residues 16-34 (WPLTGALSALLMSSGLTMW). Over 35-40 (FHFNSL) the chain is Mitochondrial intermembrane. Residues 41 to 66 (ILLTTGLVTNILTMYQWWRDVIREST) traverse the membrane as a helical segment. The Mitochondrial matrix portion of the chain corresponds to 67 to 72 (FQGHHT). Residues 73–105 (PVVQKGLRYGMVLFIISEVLFFTGFFWAFYHSS) traverse the membrane as a helical segment. Residues 106 to 128 (LAPTPELGGCWPPTGINPLNPLE) lie on the Mitochondrial intermembrane side of the membrane. A helical membrane pass occupies residues 129-152 (VPLLNTSVLLASGVSITWAHHSLM). The Mitochondrial matrix segment spans residues 153 to 155 (EGN). The helical transmembrane segment at 156–183 (RKQMLQALFITIALGVYFTLLQASEYHE) threads the bilayer. The Mitochondrial intermembrane portion of the chain corresponds to 184–190 (ASFTISD). Residues 191–223 (GVYGSTFFVATGFHGLHVIIGSTFLIVCFLRQL) traverse the membrane as a helical segment. Topologically, residues 224 to 232 (KFHFTSDHH) are mitochondrial matrix. The chain crosses the membrane as a helical span at residues 233–256 (FGFEAAAWYWHFVDVVWLFLYVSI). The Mitochondrial intermembrane portion of the chain corresponds to 257-261 (YWWGS).

Belongs to the cytochrome c oxidase subunit 3 family. In terms of assembly, component of the cytochrome c oxidase (complex IV, CIV), a multisubunit enzyme composed of 14 subunits. The complex is composed of a catalytic core of 3 subunits MT-CO1, MT-CO2 and MT-CO3, encoded in the mitochondrial DNA, and 11 supernumerary subunits COX4I, COX5A, COX5B, COX6A, COX6B, COX6C, COX7A, COX7B, COX7C, COX8 and NDUFA4, which are encoded in the nuclear genome. The complex exists as a monomer or a dimer and forms supercomplexes (SCs) in the inner mitochondrial membrane with NADH-ubiquinone oxidoreductase (complex I, CI) and ubiquinol-cytochrome c oxidoreductase (cytochrome b-c1 complex, complex III, CIII), resulting in different assemblies (supercomplex SCI(1)III(2)IV(1) and megacomplex MCI(2)III(2)IV(2)).

The protein localises to the mitochondrion inner membrane. It carries out the reaction 4 Fe(II)-[cytochrome c] + O2 + 8 H(+)(in) = 4 Fe(III)-[cytochrome c] + 2 H2O + 4 H(+)(out). Functionally, component of the cytochrome c oxidase, the last enzyme in the mitochondrial electron transport chain which drives oxidative phosphorylation. The respiratory chain contains 3 multisubunit complexes succinate dehydrogenase (complex II, CII), ubiquinol-cytochrome c oxidoreductase (cytochrome b-c1 complex, complex III, CIII) and cytochrome c oxidase (complex IV, CIV), that cooperate to transfer electrons derived from NADH and succinate to molecular oxygen, creating an electrochemical gradient over the inner membrane that drives transmembrane transport and the ATP synthase. Cytochrome c oxidase is the component of the respiratory chain that catalyzes the reduction of oxygen to water. Electrons originating from reduced cytochrome c in the intermembrane space (IMS) are transferred via the dinuclear copper A center (CU(A)) of subunit 2 and heme A of subunit 1 to the active site in subunit 1, a binuclear center (BNC) formed by heme A3 and copper B (CU(B)). The BNC reduces molecular oxygen to 2 water molecules using 4 electrons from cytochrome c in the IMS and 4 protons from the mitochondrial matrix. This is Cytochrome c oxidase subunit 3 (MT-CO3) from Hippopotamus amphibius (Hippopotamus).